The chain runs to 287 residues: Lycopene elongase/hydratase (287 aa).

7 helical membrane-spanning segments follow: residues 15 to 35 (ISWI…AGEI), 37 to 57 (WLFW…MYGI), 87 to 107 (TLLW…FIFG), 137 to 157 (FIDA…GATI), 166 to 186 (MWIA…LGAV), 218 to 238 (LLAA…GIAI), and 265 to 285 (VFLW…IAIH).

It belongs to the UbiA prenyltransferase family.

It is found in the cell membrane. It catalyses the reaction all-trans-lycopene + dimethylallyl diphosphate + A + H2O = nonaflavuxanthin + AH2 + diphosphate. It carries out the reaction nonaflavuxanthin + dimethylallyl diphosphate + A + H2O = flavuxanthin + AH2 + diphosphate. Its pathway is carotenoid biosynthesis. Functionally, catalyzes the elongation of the C(40) carotenoid all-trans-lycopene to the acyclic C(50) carotenoid flavuxanthin during decaprenoxanthin biosynthesis. Acts as a bifunctional enzyme that catalyzes the elongation of lycopene by attaching a C(5) isoprene unit at C-2, as well as the hydroxylation of the new isoprene unit. The enzyme acts at both ends of the substrate, forming the C(50) carotenoid flavuxanthin via the C(45) intermediate nonaflavuxanthin. This Corynebacterium glutamicum (strain ATCC 13032 / DSM 20300 / JCM 1318 / BCRC 11384 / CCUG 27702 / LMG 3730 / NBRC 12168 / NCIMB 10025 / NRRL B-2784 / 534) protein is Lycopene elongase/hydratase.